Here is a 230-residue protein sequence, read N- to C-terminus: All-trans retinoic acid-induced differentiation factor (230 aa).

An N-terminal signal peptide occupies residues 1-26; that stretch reads MTANVTVSSMYLFTVLLLLFNVYVNS. Residues 27-200 lie on the Extracellular side of the membrane; the sequence is QDTDAQLCQM…YKCMRQGEFP (174 aa). Residues 152 to 194 form the EGF-like domain; that stretch reads QKNACNQTVQMPLVCPENSLCSPYGPGFFECSCLNNFHGYKCM. Disulfide bonds link Cys156–Cys172, Cys166–Cys182, and Cys184–Cys193. Residues 201 to 221 traverse the membrane as a helical segment; that stretch reads LVKVLGILTASTVVVSSVLWF. The Cytoplasmic segment spans residues 222 to 230; sequence TQRRKVKNT.

The protein localises to the nucleus envelope. It is found in the cell membrane. Its subcellular location is the lysosome membrane. Functionally, involved in osteoblast cell differentiation. May play a role in inducing the cell cycle arrest. The protein is All-trans retinoic acid-induced differentiation factor (atraid) of Danio rerio (Zebrafish).